Here is a 334-residue protein sequence, read N- to C-terminus: MASVQEKLITCVCQDKPAKPTNKITIVGVGQVGMACAVSVLLKELADELALVDILEDKLKGEMMDLQHGSLFLKTPTIVADKDYSVTANSRIVVVTGGVRQQEGESRLNLVQRNVNIFKFIIPQIVKYSPDCIILVVSNPVDILTYVTWKLSGLPQHRIIGSGTNLDSARFRHLIAEKLGVHPTSCHGFILGEHGDSSVAVWSGVNVAGVSLQSLKPDIGTDEDCCKWKEVHKQVVDSAYEVIKLKGYTNWAIGFSVAEIVESITKNLGRVHPVSTMVKGMYGIETEVFLSLPCVLNGNGLTSVINQKLKDNEVGQLQKSAETLWSIQKDLKDL.

NAD(+)-binding positions include 30–58 (GQVGMACAVSVLLKELADELALVDILEDK) and arginine 100. Substrate contacts are provided by arginine 107, asparagine 139, and arginine 170. NAD(+) is bound at residue asparagine 139. Histidine 194 (proton acceptor) is an active-site residue. Threonine 249 contributes to the substrate binding site.

Belongs to the LDH/MDH superfamily. LDH family. As to quaternary structure, homotetramer.

The protein localises to the cytoplasm. The catalysed reaction is (S)-lactate + NAD(+) = pyruvate + NADH + H(+). It participates in fermentation; pyruvate fermentation to lactate; (S)-lactate from pyruvate: step 1/1. Interconverts simultaneously and stereospecifically pyruvate and lactate with concomitant interconversion of NADH and NAD(+). The sequence is that of L-lactate dehydrogenase A chain (ldha) from Xenopus laevis (African clawed frog).